Here is a 160-residue protein sequence, read N- to C-terminus: Small ribosomal subunit protein bS16 (160 aa).

A disordered region spans residues 115 to 139 (GGPTTEATRPKKKVSAKKAAKAVES). Positions 124 to 134 (PKKKVSAKKAA) are enriched in basic residues.

This sequence belongs to the bacterial ribosomal protein bS16 family.

This Mycobacterium leprae (strain Br4923) protein is Small ribosomal subunit protein bS16.